The sequence spans 92 residues: Small ribosomal subunit protein uS19 (92 aa).

Belongs to the universal ribosomal protein uS19 family.

In terms of biological role, protein S19 forms a complex with S13 that binds strongly to the 16S ribosomal RNA. The chain is Small ribosomal subunit protein uS19 from Polynucleobacter asymbioticus (strain DSM 18221 / CIP 109841 / QLW-P1DMWA-1) (Polynucleobacter necessarius subsp. asymbioticus).